A 704-amino-acid chain; its full sequence is Protein kinase C-like 1 (704 aa).

2 positions are modified to phosphothreonine; by autocatalysis: Thr89 and Thr139. 2 consecutive Phorbol-ester/DAG-type zinc fingers follow at residues 165-215 and 237-287; these read GHQF…IMQC and PHRF…SNLC. Thr324 carries the post-translational modification Phosphothreonine; by autocatalysis. Residues 375 to 634 enclose the Protein kinase domain; sequence FNLLKVLGKG…DGPIRQHCFF (260 aa). ATP contacts are provided by residues 381-389 and Lys404; that span reads LGKGSFGKV. Asp499 acts as the Proton acceptor in catalysis. In terms of domain architecture, AGC-kinase C-terminal spans 635-704; that stretch reads RGVDWKRFEN…FSYTNPHFSK (70 aa).

The protein belongs to the protein kinase superfamily. AGC Ser/Thr protein kinase family. PKC subfamily.

It carries out the reaction L-seryl-[protein] + ATP = O-phospho-L-seryl-[protein] + ADP + H(+). The catalysed reaction is L-threonyl-[protein] + ATP = O-phospho-L-threonyl-[protein] + ADP + H(+). Diacylglycerol (DAG)-dependent serine/threonine-protein kinase that phosphorylates a range of cellular proteins. Phosphorylates mlk-1, a component of the JNK pathway. Involved in axon regeneration after injury probably by activating the JNK pathway. Plays a role in resistance to fungal infection and in wound healing by promoting expression of antimicrobial peptide nlp-29 in the epidermis downstream of gpa-12 and plc-3 and upstream of tir-1-p38-like pathway. Probably by regulating neuronal transmission in ALA neurons, regulates the decrease in pharyngeal pumping during the quiescent state that precedes each larval molt, downstream of lin-3 and receptor let-23 and phospholipase plc-3. The chain is Protein kinase C-like 1 (tpa-1) from Caenorhabditis elegans.